Consider the following 1592-residue polypeptide: MGTDPLIIRNNGSFWEVDDFTRLGRTQLLSYYLPLAIIASIGIFALCRSGLSRYVRSAECDLVNEYLFGAQEERKEDNSIERLLRNSNTQANYVNVKKQGRILKLRHFDITTIDVKQIDAKNHGGLTFSRPSTSDHLRKSSEIVLMSLQIIGLSFLRVTKINIELTNRDVTTLLLFWLILLSLSILRVYKRSTNLWAICFTAHTTIWISTWIPIRSVYIGNIDDVPSQIFYIFEFVITSTLQPIKLTSPIKDNSSIIYVRDDHTSPSREHISSILSCITWSWITNFIWEAQKNTIKLKDIWGLSMEDYSIFILKGFTRRNKHINNLTLALFESFKTYLLIGMLWVLVNSIVNLLPTILMKRFLEIVDNPNRSSSCMNLAWLYIIGMFICRLTLAICNSQGQFVSDKICLRIRAILIGEIYAKGLRRRLFTSPKTSSDSDSISANLGTIINLISIDSFKVSELANYLYVTVQAVIMIIVVVGLLFNFLGVSAFAGISIILVMFPLNFLLANLLGKFQKQTLKCTDQRISKLNECLQNIRIVKYFAWERNIINEIKSIRQKELRSLLKKSLVWSVTSFLWFVTPTLVTGVTFAICTFVQHEDLNAPLAFTTLSLFTLLKTPLDQLSNMLSFINQSKVSLKRISDFLRMDDTEKYNQLTISPDKNKIEFKNATLTWNENDSDMNAFKLCGLNIKFQIGKLNLILGSTGSGKSALLLGLLGELNLISGSIIVPSLEPKHDLIPDCEGLTNSFAYCSQSAWLLNDTVKNNIIFDNFYNEDRYNKVIDACGLKRDLEILPAGDLTEIGEKGITLSGGQKQRISLARAVYSSAKHVLLDDCLSAVDSHTAVWIYENCITGPLMKNRTCILVTHNVSLTLRNAHFAIVLENGKVKNQGTITELQSKGLFKEKYVQLSSRDSINEKNANRLKAPRKNDSQKIEPVTENINFDANFVNDGQLIEEEEKSNGAISPDVYKWYLKFFGGFKALTALFALYITAQILFISQSWWIRHWVNDTNVRINAPGFAMDTLPLKGMTDSSKNKHNAFYYLTVYFLIGIIQAMLGGFKTMMTFLSGMRASRKIFNNLLDLVLHAQIRFFDVTPVGRIMNRFSKDIEGVDQELIPYLEVTIFCLIQCASIIFLITVITPRFLTVAVIVFVLYFFVGKWYLTASRELKRLDSITKSPIFQHFSETLVGVCTIRAFGDERRFILENMNKIDQNNRAFFYLSVTVKWFSFRVDMIGAFIVLASGSFILLNIANIDSGLAGISLTYAILFTDGALWLVRLYSTFEMNMNSVERLKEYSSIEQENYLGHDEGRILLLNEPSWPKDGEIEIENLSLRYAPNLPPVIRNVSFKVDPQSKIGIVGRTGAGKSTIITALFRLLEPITGCIKIDGQDISKIDLVTLRRSITIIPQDPILFAGTIKSNVDPYDEYDEKKIFKALSQVNLISSHEFEEVLNSEERFNSTHNKFLNLHTEIAEGGLNLSQGERQLLFIARSLLREPKIILLDEATSSIDYDSDHLIQGIIRSEFNKSTILTIAHRLRSVIDYDRIIVMDAGEVKEYDRPSELLKDERGIFYSMCRDSGGLELLKQIAKQSSKMMK.

Topologically, residues 1–33 (MGTDPLIIRNNGSFWEVDDFTRLGRTQLLSYYL) are vacuolar. N-linked (GlcNAc...) asparagine glycosylation occurs at asparagine 11. Residues 34 to 54 (PLAIIASIGIFALCRSGLSRY) form a helical membrane-spanning segment. At 55–74 (VRSAECDLVNEYLFGAQEER) the chain is on the cytoplasmic side. The chain crosses the membrane as a helical span at residues 75–95 (KEDNSIERLLRNSNTQANYVN). Topologically, residues 96–100 (VKKQG) are vacuolar. The chain crosses the membrane as a helical span at residues 101–121 (RILKLRHFDITTIDVKQIDAK). The Cytoplasmic segment spans residues 122–131 (NHGGLTFSRP). A helical transmembrane segment spans residues 132-152 (STSDHLRKSSEIVLMSLQIIG). Residues 153–170 (LSFLRVTKINIELTNRDV) are Vacuolar-facing. A helical transmembrane segment spans residues 171–191 (TTLLLFWLILLSLSILRVYKR). Over 192 to 329 (STNLWAICFT…NKHINNLTLA (138 aa)) the chain is Cytoplasmic. Residues 330 to 350 (LFESFKTYLLIGMLWVLVNSI) traverse the membrane as a helical segment. Residues 338–632 (LLIGMLWVLV…LSNMLSFINQ (295 aa)) form the ABC transmembrane type-1 1 domain. Over 351–379 (VNLLPTILMKRFLEIVDNPNRSSSCMNLA) the chain is Vacuolar. A glycan (N-linked (GlcNAc...) asparagine) is linked at asparagine 370. The helical transmembrane segment at 380–400 (WLYIIGMFICRLTLAICNSQG) threads the bilayer. Over 401–465 (QFVSDKICLR…SFKVSELANY (65 aa)) the chain is Cytoplasmic. A helical membrane pass occupies residues 466-486 (LYVTVQAVIMIIVVVGLLFNF). Residues 487-489 (LGV) lie on the Vacuolar side of the membrane. The helical transmembrane segment at 490-510 (SAFAGISIILVMFPLNFLLAN) threads the bilayer. The Cytoplasmic segment spans residues 511 to 572 (LLGKFQKQTL…SLLKKSLVWS (62 aa)). A helical transmembrane segment spans residues 573-593 (VTSFLWFVTPTLVTGVTFAIC). Residues 594–614 (TFVQHEDLNAPLAFTTLSLFT) are Vacuolar-facing. Residues 615–635 (LLKTPLDQLSNMLSFINQSKV) form a helical membrane-spanning segment. At 636–989 (SLKRISDFLR…ALTALFALYI (354 aa)) the chain is on the cytoplasmic side. Positions 664-908 (IEFKNATLTW…GLFKEKYVQL (245 aa)) constitute an ABC transporter 1 domain. An ATP-binding site is contributed by 702 to 709 (GSTGSGKS). The region spanning 981-1282 (LTALFALYIT…LVRLYSTFEM (302 aa)) is the ABC transmembrane type-1 2 domain. A helical membrane pass occupies residues 990-1010 (TAQILFISQSWWIRHWVNDTN). Residues 1011 to 1051 (VRINAPGFAMDTLPLKGMTDSSKNKHNAFYYLTVYFLIGII) lie on the Vacuolar side of the membrane. Residues 1052–1072 (QAMLGGFKTMMTFLSGMRASR) form a helical membrane-spanning segment. Topologically, residues 1073-1115 (KIFNNLLDLVLHAQIRFFDVTPVGRIMNRFSKDIEGVDQELIP) are cytoplasmic. Residues 1116–1136 (YLEVTIFCLIQCASIIFLITV) form a helical membrane-spanning segment. Position 1137 (isoleucine 1137) is a topological domain, vacuolar. The helical transmembrane segment at 1138 to 1158 (TPRFLTVAVIVFVLYFFVGKW) threads the bilayer. Over 1159-1229 (YLTASRELKR…VTVKWFSFRV (71 aa)) the chain is Cytoplasmic. A helical transmembrane segment spans residues 1230 to 1250 (DMIGAFIVLASGSFILLNIAN). Residues 1251 to 1252 (ID) are Vacuolar-facing. A helical transmembrane segment spans residues 1253 to 1273 (SGLAGISLTYAILFTDGALWL). At 1274–1592 (VRLYSTFEMN…IAKQSSKMMK (319 aa)) the chain is on the cytoplasmic side. In terms of domain architecture, ABC transporter 2 spans 1323 to 1572 (IEIENLSLRY…ERGIFYSMCR (250 aa)). 1357-1364 (GRTGAGKS) lines the ATP pocket.

It belongs to the ABC transporter superfamily. As to quaternary structure, ABC transporter which may be involved in multidrug resistance.

The protein localises to the vacuole membrane. In Saccharomyces cerevisiae (strain ATCC 204508 / S288c) (Baker's yeast), this protein is ABC transporter ATP-binding protein/permease VMR1 (VMR1).